The sequence spans 198 residues: Pre-histone-like nucleoprotein (198 aa).

An N-acetylserine; by host modification is found at Ser-2. Positions 2–24 (SILISPSNNTGWGLRFPSKMFGG) are excised as a propeptide. Residues 24-55 (GAKKRSDQHPVRVRGHYRAPWGAHKRGRTGRT) form a disordered region. 2 positions are modified to N6-acetyllysine; by host: Lys-27 and Lys-48. The segment covering 34–52 (VRVRGHYRAPWGAHKRGRT) has biased composition (basic residues). Phosphothreonine; by host is present on residues Thr-55 and Thr-74. Phosphoserine; by host is present on residues Ser-183 and Ser-185. A Nuclear localization signal motif is present at residues 188-198 (RVPVRTRPPRN).

It belongs to the adenoviridae histone-like nucleoprotein family. In terms of assembly, interacts with the core-capsid bridging protein; this interaction bridges the virus core to the capsid. Interacts with host NPM1; this interaction might play a role in placing the pre-histone-like nucleoprotein on the viral DNA or regulating viral gene expression. Interacts with host HMGB1; this interaction inhibits host immune response. Cleaved near the N-terminus by the viral protease during virion maturation to form the mature protein.

The protein localises to the virion. Its subcellular location is the host nucleus. The protein resides in the host nucleolus. Its function is as follows. Plays a role in the inhibition of host immune response within the nucleus. Interacts with cellular nucleosomes and immobilizes the host immune danger signal HMGB1 on chromatin. In turn, prevents HMGB1 release out of the cell and thus decreases inflammation. Also plays a role in the wrapping and condensation of the viral DNA. May also promote viral genome import into the nucleus. The protein is Pre-histone-like nucleoprotein of Human adenovirus C serotype 2 (HAdV-2).